Here is a 341-residue protein sequence, read N- to C-terminus: Adenylosuccinate synthetase (341 aa).

GTP is bound by residues 12–18 (GDEGKGK) and 42–44 (GHS). Catalysis depends on aspartate 13, which acts as the Proton acceptor. Residues aspartate 13 and glycine 42 each contribute to the Mg(2+) site. IMP-binding positions include 13–16 (DEGK), 40–43 (NAGH), threonine 127, arginine 141, glutamine 179, threonine 194, and arginine 256. The active-site Proton donor is histidine 43. 252–258 (VVTGRKR) contributes to the substrate binding site. GTP contacts are provided by residues arginine 258, 284 to 286 (CID), and 324 to 326 (STG).

This sequence belongs to the adenylosuccinate synthetase family. As to quaternary structure, homodimer. Requires Mg(2+) as cofactor.

It is found in the cytoplasm. It catalyses the reaction IMP + L-aspartate + GTP = N(6)-(1,2-dicarboxyethyl)-AMP + GDP + phosphate + 2 H(+). Its pathway is purine metabolism; AMP biosynthesis via de novo pathway; AMP from IMP: step 1/2. Plays an important role in the de novo pathway of purine nucleotide biosynthesis. Catalyzes the first committed step in the biosynthesis of AMP from IMP. The sequence is that of Adenylosuccinate synthetase from Methanosphaera stadtmanae (strain ATCC 43021 / DSM 3091 / JCM 11832 / MCB-3).